We begin with the raw amino-acid sequence, 336 residues long: Anthranilate phosphoribosyltransferase (336 aa).

5-phospho-alpha-D-ribose 1-diphosphate-binding positions include Gly79, 82–83 (GD), Thr87, 89–92 (NISS), 107–115 (KHGNRSVSS), and Ser119. Gly79 lines the anthranilate pocket. Ser91 is a Mg(2+) binding site. Anthranilate is bound at residue Asn110. An anthranilate-binding site is contributed by Arg165. Mg(2+) contacts are provided by Asp223 and Glu224.

It belongs to the anthranilate phosphoribosyltransferase family. Homodimer. Requires Mg(2+) as cofactor.

It catalyses the reaction N-(5-phospho-beta-D-ribosyl)anthranilate + diphosphate = 5-phospho-alpha-D-ribose 1-diphosphate + anthranilate. Its pathway is amino-acid biosynthesis; L-tryptophan biosynthesis; L-tryptophan from chorismate: step 2/5. Catalyzes the transfer of the phosphoribosyl group of 5-phosphorylribose-1-pyrophosphate (PRPP) to anthranilate to yield N-(5'-phosphoribosyl)-anthranilate (PRA). In Tolumonas auensis (strain DSM 9187 / NBRC 110442 / TA 4), this protein is Anthranilate phosphoribosyltransferase.